Here is a 412-residue protein sequence, read N- to C-terminus: Carboxypeptidase B1 (412 aa).

The first 18 residues, methionine 1–alanine 18, serve as a signal peptide directing secretion. A propeptide spans arginine 19–serine 75 (activation peptide). Residues serine 118–valine 408 enclose the Peptidase M14 domain. Zn(2+) contacts are provided by histidine 175 and glutamate 178. Histidine 175–glutamate 178 provides a ligand contact to a peptide. Asparagine 205 is a glycosylation site (N-linked (GlcNAc...) asparagine). Residues arginine 230 and asparagine 246–arginine 247 each bind a peptide. Cysteine 240 and cysteine 263 are disulfide-bonded. Residue histidine 299 coordinates Zn(2+). Residues serine 300 to tyrosine 301 and tyrosine 351 each bind a peptide. Catalysis depends on glutamate 374, which acts as the Proton donor/acceptor. N-linked (GlcNAc...) asparagine glycosylation is present at asparagine 395.

Belongs to the peptidase M14 family. In terms of assembly, monomer. Interacts with Dengue virus type 2 (DENV2, MY89-88549 strain) envelope protein E. Interacts with Dengue virus envelope protein E type 3, type 2, type 4 and type 1 with decreasing strength. Requires Zn(2+) as cofactor. As to expression, expressed in midgut (at protein level).

The protein resides in the endoplasmic reticulum. It catalyses the reaction Preferential release of a C-terminal lysine or arginine amino acid.. Its activity is regulated as follows. Inhibited by S.tuberosum metallocarboxypeptidase inhibitor. In terms of biological role, carboxypeptidase that preferentially hydrolyzes arginine and lysine residues at the C-terminus. During infection by dengue virus, may play a role in preventing viral packaging, maturation, and release from the midgut. The polypeptide is Carboxypeptidase B1 (Aedes aegypti (Yellowfever mosquito)).